Consider the following 297-residue polypeptide: Tyrosine recombinase XerD (297 aa).

A Core-binding (CB) domain is found at 1–86 (MKNLALIDLF…AMRKLFQYLY (86 aa)). The Tyr recombinase domain maps to 107–291 (RLPKYLTEQQ…AKERLKRLHE (185 aa)). Active-site residues include R147, K171, H243, R246, and H269. The active-site O-(3'-phospho-DNA)-tyrosine intermediate is the Y278.

The protein belongs to the 'phage' integrase family. XerD subfamily. As to quaternary structure, forms a cyclic heterotetrameric complex composed of two molecules of XerC and two molecules of XerD.

It localises to the cytoplasm. In terms of biological role, site-specific tyrosine recombinase, which acts by catalyzing the cutting and rejoining of the recombining DNA molecules. The XerC-XerD complex is essential to convert dimers of the bacterial chromosome into monomers to permit their segregation at cell division. It also contributes to the segregational stability of plasmids. The sequence is that of Tyrosine recombinase XerD from Haemophilus influenzae (strain ATCC 51907 / DSM 11121 / KW20 / Rd).